A 138-amino-acid chain; its full sequence is Lymphocyte antigen 6L (138 aa).

The signal sequence occupies residues 1–16 (MERLVLTLCTLPLAVA). N-linked (GlcNAc...) asparagine glycosylation occurs at Asn-27. A UPAR/Ly6 domain is found at 28 to 122 (LSCYQCFKVS…TPQEGRWALR (95 aa)). Intrachain disulfides connect Cys-30–Cys-47 and Cys-103–Cys-108. The GPI-anchor amidated glycine moiety is linked to residue Gly-117. A propeptide spans 118–138 (RWALRGGLLLQVGLSLLRALL) (removed in mature form).

The protein localises to the cell membrane. This Homo sapiens (Human) protein is Lymphocyte antigen 6L.